The following is an 837-amino-acid chain: Semaphorin-4G (837 aa).

A signal peptide spans 1-17 (MWGRLWPLLFSFLTVTA). The Extracellular segment spans residues 18–673 (VPGPSLRRPS…GAQLAHDMRM (656 aa)). The 469-residue stretch at 35–503 (RLTISYEELS…AASGVLQFPL (469 aa)) folds into the Sema domain. N-linked (GlcNAc...) asparagine glycosylation is found at N55, N111, and N126. An intrachain disulfide couples C104 to C115. 3 disulfides stabilise this stretch: C133–C142, C268–C375, and C292–C335. A glycan (N-linked (GlcNAc...) asparagine) is linked at N386. The PSI domain occupies 505 to 556 (SCSRYQSCYDCILARDPYCGWDSSIHACMVATTVANRTELIQDIERGNRGCE). 2 cysteine pairs are disulfide-bonded: C506/C523 and C515/C532. 2 N-linked (GlcNAc...) asparagine glycosylation sites follow: N540 and N596. One can recognise an Ig-like C2-type domain in the interval 565 to 647 (PPLKTRSVLR…RMLLASYSLT (83 aa)). A disulfide bond links C582 and C630. The chain crosses the membrane as a helical span at residues 674 to 694 (FYVVAIAILGGLCLILASSLL). Residues 695-837 (YVACLKGGRR…LVEQLDESSV (143 aa)) are Cytoplasmic-facing. Positions 721–776 (SAVQLQTVSGQCPGEEDEGDDGEGTGGLESGCLQIIPGEGAPAPPPPPPPPPPAEL) are disordered. Residues 734–743 (GEEDEGDDGE) show a composition bias toward acidic residues. A compositionally biased stretch (pro residues) spans 762-774 (PAPPPPPPPPPPA). Phosphoserine is present on residues S794 and S836.

Belongs to the semaphorin family. Interacts with PLXNB2. Brain, spinal cord, and several sensory organs as well as specific populations of projection neurons.

It is found in the cell membrane. Functionally, cell surface receptor for PLXNB2. May play a role in axon guidance. The chain is Semaphorin-4G (Sema4g) from Mus musculus (Mouse).